A 287-amino-acid polypeptide reads, in one-letter code: Inorganic pyrophosphatase (287 aa).

R79 is a binding site for diphosphate. The Mg(2+) site is built by D116, D121, and D153.

Belongs to the PPase family. Mg(2+) is required as a cofactor.

It localises to the cytoplasm. It catalyses the reaction diphosphate + H2O = 2 phosphate + H(+). The polypeptide is Inorganic pyrophosphatase (IPP1) (Debaryomyces hansenii (strain ATCC 36239 / CBS 767 / BCRC 21394 / JCM 1990 / NBRC 0083 / IGC 2968) (Yeast)).